The following is a 921-amino-acid chain: Collagen alpha-1(IX) chain (921 aa).

Positions Met-1–Ala-23 are cleaved as a signal peptide. The interval Ala-24–Arg-268 is nonhelical region (NC4). 2 disulfide bridges follow: Cys-44-Cys-242 and Cys-198-Cys-252. In terms of domain architecture, Laminin G-like spans Gly-50 to Pro-244. An N-linked (GlcNAc...) asparagine glycan is attached at Asn-171. Zn(2+) contacts are provided by Asp-213, Asp-215, and His-253. Disordered regions lie at residues Glu-254–Asp-759 and Arg-783–Ser-905. 8 consecutive Collagen-like domains span residues Gly-269–Ala-324, Asp-325–Gly-356, Gly-358–Gly-403, Pro-416–Gly-472, Ile-473–Lys-516, Glu-587–Gly-643, Gly-655–Gly-712, and Leu-713–Arg-755. The tract at residues Gly-269–His-405 is triple-helical region (COL3). Composition is skewed to pro residues over residues Glu-273 to Val-285 and Lys-298 to Ala-307. Positions Thr-368–Asp-383 are enriched in low complexity. The span at Arg-387 to Pro-398 shows a compositional bias: pro residues. The segment at Asp-406–Pro-417 is nonhelical region (NC3). The tract at residues Gly-418–Ala-756 is triple-helical region (COL2). Residues Asp-479–Asp-489 show a composition bias toward basic and acidic residues. 2 stretches are compositionally biased toward low complexity: residues Asn-602–Gln-621 and Leu-630–Leu-650. Positions Pro-757–Ser-786 are nonhelical region (NC2). The interval Gly-787–Cys-901 is triple-helical region (COL1). Collagen-like domains are found at residues Gly-790–Gly-847 and Arg-848–Gly-899. Over residues Arg-794–Pro-804 the composition is skewed to pro residues. The span at Pro-833–Pro-845 shows a compositional bias: basic and acidic residues. Pro residues predominate over residues Val-888–Leu-897. Positions Glu-902–Pro-921 are nonhelical region (NC1).

This sequence belongs to the fibril-associated collagens with interrupted helices (FACIT) family. As to quaternary structure, heterotrimer of an alpha 1(IX), an alpha 2(IX) and an alpha 3(IX) chain. In terms of processing, covalently linked to the telopeptides of type II collagen by lysine-derived cross-links. Post-translationally, prolines at the third position of the tripeptide repeating unit (G-X-Y) are hydroxylated in some or all of the chains.

It is found in the secreted. It localises to the extracellular space. Its subcellular location is the extracellular matrix. Structural component of hyaline cartilage and vitreous of the eye. The protein is Collagen alpha-1(IX) chain (COL9A1) of Homo sapiens (Human).